The chain runs to 200 residues: MYAYFRGRLVSCLPEEAVLEVSGIAYRFLVSAGTARQLPEVGTETILYTHLSVREDALQLYGFATEEEKQLFRLLLLTSGVGPKLALAVLSGMAVPEVHEAILANAPERLFGITGVGRKTAARIILELRDKILKLAPVGSAVASVAADRGGFREDAVNALMTLGFPRPVANQAVGCALEPEPDASLEVVIKRALATMHNR.

A domain I region spans residues 1–64 (MYAYFRGRLV…EDALQLYGFA (64 aa)). The domain II stretch occupies residues 65 to 143 (TEEEKQLFRL…KLAPVGSAVA (79 aa)). Residues 144-154 (SVAADRGGFRE) are flexible linker. Residues 154–200 (EDAVNALMTLGFPRPVANQAVGCALEPEPDASLEVVIKRALATMHNR) are domain III.

This sequence belongs to the RuvA family. Homotetramer. Forms an RuvA(8)-RuvB(12)-Holliday junction (HJ) complex. HJ DNA is sandwiched between 2 RuvA tetramers; dsDNA enters through RuvA and exits via RuvB. An RuvB hexamer assembles on each DNA strand where it exits the tetramer. Each RuvB hexamer is contacted by two RuvA subunits (via domain III) on 2 adjacent RuvB subunits; this complex drives branch migration. In the full resolvosome a probable DNA-RuvA(4)-RuvB(12)-RuvC(2) complex forms which resolves the HJ.

It is found in the cytoplasm. Functionally, the RuvA-RuvB-RuvC complex processes Holliday junction (HJ) DNA during genetic recombination and DNA repair, while the RuvA-RuvB complex plays an important role in the rescue of blocked DNA replication forks via replication fork reversal (RFR). RuvA specifically binds to HJ cruciform DNA, conferring on it an open structure. The RuvB hexamer acts as an ATP-dependent pump, pulling dsDNA into and through the RuvAB complex. HJ branch migration allows RuvC to scan DNA until it finds its consensus sequence, where it cleaves and resolves the cruciform DNA. This is Holliday junction branch migration complex subunit RuvA from Chlorobium phaeovibrioides (strain DSM 265 / 1930) (Prosthecochloris vibrioformis (strain DSM 265)).